A 387-amino-acid chain; its full sequence is Cytochrome b (387 aa).

The next 4 helical transmembrane spans lie at 32-52 (FGSLLACVLVVQIVTGILLAC), 76-98 (FLLRALHANGASFFFIFLYLHIG), 113-133 (TWNIGVIIFLLTIITAFLGYC), and 179-199 (FFSLHYLMPFVIAALSIMHLI). Histidine 82 and histidine 96 together coordinate heme b. Residues histidine 183 and histidine 197 each coordinate heme b. A ubiquinone is bound at residue histidine 202. 4 helical membrane passes run 225-245 (FLIKDLITIFIFLLAINYMVF), 289-309 (QLGVVAMLLSILVLLLLPLLD), 321-341 (MGKFFFWCFVADFCILAWIGG), and 348-368 (FITIGAYATAFYFIYFFILIP).

This sequence belongs to the cytochrome b family. As to quaternary structure, fungal cytochrome b-c1 complex contains 10 subunits; 3 respiratory subunits, 2 core proteins and 5 low-molecular weight proteins. Cytochrome b-c1 complex is a homodimer. It depends on heme b as a cofactor.

It localises to the mitochondrion inner membrane. Component of the ubiquinol-cytochrome c reductase complex (complex III or cytochrome b-c1 complex) that is part of the mitochondrial respiratory chain. The b-c1 complex mediates electron transfer from ubiquinol to cytochrome c. Contributes to the generation of a proton gradient across the mitochondrial membrane that is then used for ATP synthesis. The polypeptide is Cytochrome b (cob) (Schizosaccharomyces octosporus (Fission yeast)).